The primary structure comprises 142 residues: Large ribosomal subunit protein uL13 (142 aa).

It belongs to the universal ribosomal protein uL13 family. As to quaternary structure, part of the 50S ribosomal subunit.

This protein is one of the early assembly proteins of the 50S ribosomal subunit, although it is not seen to bind rRNA by itself. It is important during the early stages of 50S assembly. The chain is Large ribosomal subunit protein uL13 from Syntrophus aciditrophicus (strain SB).